The chain runs to 216 residues: Octanoyltransferase (216 aa).

Residues 35 to 213 (NSNPDFIWIG…TIEEEFNFDF (179 aa)) form the BPL/LPL catalytic domain. Residues 77 to 84 (RGGEVTCH), 144 to 146 (SIG), and 157 to 159 (GFS) each bind substrate. Cysteine 175 (acyl-thioester intermediate) is an active-site residue.

Belongs to the LipB family.

It localises to the cytoplasm. The catalysed reaction is octanoyl-[ACP] + L-lysyl-[protein] = N(6)-octanoyl-L-lysyl-[protein] + holo-[ACP] + H(+). Its pathway is protein modification; protein lipoylation via endogenous pathway; protein N(6)-(lipoyl)lysine from octanoyl-[acyl-carrier-protein]: step 1/2. In terms of biological role, catalyzes the transfer of endogenously produced octanoic acid from octanoyl-acyl-carrier-protein onto the lipoyl domains of lipoate-dependent enzymes. Lipoyl-ACP can also act as a substrate although octanoyl-ACP is likely to be the physiological substrate. The sequence is that of Octanoyltransferase from Prochlorococcus marinus (strain MIT 9301).